Here is a 305-residue protein sequence, read N- to C-terminus: Oxygen-dependent coproporphyrinogen-III oxidase (305 aa).

A substrate-binding site is contributed by Ser-93. A divalent metal cation-binding residues include His-97 and His-107. The active-site Proton donor is His-107. Residue 109–111 (NVR) participates in substrate binding. Residues His-146 and His-176 each contribute to the a divalent metal cation site. An important for dimerization region spans residues 241–276 (YVEFNLVYDRGTLFGLQSGGRTESILMSLPPQVRWG). Position 259–261 (259–261 (GGR)) interacts with substrate.

This sequence belongs to the aerobic coproporphyrinogen-III oxidase family. In terms of assembly, homodimer. The cofactor is a divalent metal cation.

It is found in the cytoplasm. The catalysed reaction is coproporphyrinogen III + O2 + 2 H(+) = protoporphyrinogen IX + 2 CO2 + 2 H2O. The protein operates within porphyrin-containing compound metabolism; protoporphyrin-IX biosynthesis; protoporphyrinogen-IX from coproporphyrinogen-III (O2 route): step 1/1. Involved in the heme biosynthesis. Catalyzes the aerobic oxidative decarboxylation of propionate groups of rings A and B of coproporphyrinogen-III to yield the vinyl groups in protoporphyrinogen-IX. This is Oxygen-dependent coproporphyrinogen-III oxidase from Pseudomonas fluorescens (strain ATCC BAA-477 / NRRL B-23932 / Pf-5).